We begin with the raw amino-acid sequence, 335 residues long: Magnesium-protoporphyrin IX monomethyl ester [oxidative] cyclase (335 aa).

Belongs to the AcsF family. Requires Fe cation as cofactor.

It is found in the plastid. It localises to the chloroplast. It carries out the reaction Mg-protoporphyrin IX 13-monomethyl ester + 3 NADPH + 3 O2 + 2 H(+) = 3,8-divinyl protochlorophyllide a + 3 NADP(+) + 5 H2O. The protein operates within porphyrin-containing compound metabolism; chlorophyll biosynthesis (light-independent). Catalyzes the formation of the isocyclic ring in chlorophyll biosynthesis. Mediates the cyclase reaction, which results in the formation of divinylprotochlorophyllide (Pchlide) characteristic of all chlorophylls from magnesium-protoporphyrin IX 13-monomethyl ester (MgPMME). This Cyanidioschyzon merolae (strain NIES-3377 / 10D) (Unicellular red alga) protein is Magnesium-protoporphyrin IX monomethyl ester [oxidative] cyclase.